A 200-amino-acid chain; its full sequence is Holliday junction branch migration complex subunit RuvA (200 aa).

The tract at residues Met1–His64 is domain I. A domain II region spans residues Asn65–Pro143. Residues Glu144–Ser148 form a flexible linker region. The tract at residues Ser149–Thr200 is domain III.

This sequence belongs to the RuvA family. Homotetramer. Forms an RuvA(8)-RuvB(12)-Holliday junction (HJ) complex. HJ DNA is sandwiched between 2 RuvA tetramers; dsDNA enters through RuvA and exits via RuvB. An RuvB hexamer assembles on each DNA strand where it exits the tetramer. Each RuvB hexamer is contacted by two RuvA subunits (via domain III) on 2 adjacent RuvB subunits; this complex drives branch migration. In the full resolvosome a probable DNA-RuvA(4)-RuvB(12)-RuvC(2) complex forms which resolves the HJ.

The protein resides in the cytoplasm. Its function is as follows. The RuvA-RuvB-RuvC complex processes Holliday junction (HJ) DNA during genetic recombination and DNA repair, while the RuvA-RuvB complex plays an important role in the rescue of blocked DNA replication forks via replication fork reversal (RFR). RuvA specifically binds to HJ cruciform DNA, conferring on it an open structure. The RuvB hexamer acts as an ATP-dependent pump, pulling dsDNA into and through the RuvAB complex. HJ branch migration allows RuvC to scan DNA until it finds its consensus sequence, where it cleaves and resolves the cruciform DNA. This Coxiella burnetii (strain CbuG_Q212) (Coxiella burnetii (strain Q212)) protein is Holliday junction branch migration complex subunit RuvA.